The following is a 239-amino-acid chain: ATP synthase subunit a (239 aa).

5 consecutive transmembrane segments (helical) span residues 13–33 (IWFD…VFAF), 75–95 (FHLM…LGLV), 113–133 (DPIV…FFGM), 174–194 (GNIF…ASVG), and 208–230 (WVAF…SMVY).

It belongs to the ATPase A chain family. F-type ATPases have 2 components, CF(1) - the catalytic core - and CF(0) - the membrane proton channel. CF(1) has five subunits: alpha(3), beta(3), gamma(1), delta(1), epsilon(1). CF(0) has three main subunits: a(1), b(2) and c(9-12). The alpha and beta chains form an alternating ring which encloses part of the gamma chain. CF(1) is attached to CF(0) by a central stalk formed by the gamma and epsilon chains, while a peripheral stalk is formed by the delta and b chains.

It localises to the cell membrane. Functionally, key component of the proton channel; it plays a direct role in the translocation of protons across the membrane. The chain is ATP synthase subunit a from Enterococcus faecalis (strain ATCC 700802 / V583).